Reading from the N-terminus, the 863-residue chain is MGYDSQVRTKKRHRITVVCTNCKKRKSKCDRTKPCGTCVRLGDVDSCVYLTDSSGQPESSPSLNDADPLRKQSTPAERISPGFIKKRRSSQTRQDEDHWQRVRELENQSSLYYLPIHEETPFFIDLIPSGFYLETKRSADNLFGLFTDRAIENRDPYLQTMVTFRSIAIKKMMDKLGSNGNNVKNGSLPKSFEALSTFDADDERHISDDVVDKGNNFRMHQTIHKSLFNKFAQYRENNAKKFSSETILAKDYLPPLKILESEVLALFEEKIYNMIPIFDMKILRHEITIFYQNIVEKGNPVSIKHYDHMVFCIILLIIKICRLSVQFSKLTPYIYPVLQEIDTSKFLALVKHYLFETKVLRKCNLLQLQCLILLRFLHWCAPEDGDGPETQYCQILMGTIISSCKEMGINWYCFSHPEKYSFKINRHTRPSYDIMKPSDYISVFRKIWSYVLFWDRKMCFISGEECQIGKTLQCHFKEEADTPTWYIRMLTLDNLMKKINDTLNDDPGKVDLNLLHRLINDLKRNFHILKSLSKNEKETMRHFDFEMEWIIDLFSLSLLHGEMIFYEYDCNITKFYKSFQDLWDMVIHISEKCYNYFFNSDALEVDSLTKFYTNRIVEIVANKVLVIVPAFILRGDRFKTIQYADKKKMIEFLYGVSSVYFNEFGFEYYRCFRKMFTAKIAYKILNRSCEKNAWRIILKFLLNELKLEDNGDSYIDYNDMRLKDICPIILEFQETVQKYDGYRPDILSIWNNEFYPIGKYNDDMTGFKFQMRIKEMQEFLDMEKYSDRFNIFSSFYDHASSQLAKHTEVDTNISITNEQVAETPQKELLQQPLAPALPVNDLIVSEFDVIEDIFDPVDFVSFF.

The segment at residues 19–47 is a DNA-binding region (zn(2)-C6 fungal-type); sequence CTNCKKRKSKCDRTKPCGTCVRLGDVDSC. A compositionally biased stretch (polar residues) spans 52-63; sequence DSSGQPESSPSL. Residues 52–99 are disordered; sequence DSSGQPESSPSLNDADPLRKQSTPAERISPGFIKKRRSSQTRQDEDHW.

This sequence belongs to the OAF3 family.

It localises to the cytoplasm. The protein localises to the nucleus. It is found in the mitochondrion. Transcriptional inhibitor with a significantly increased number of target genes in response to oleate. This is Oleate activated transcription factor 3 (OAF3) from Saccharomyces cerevisiae (strain YJM789) (Baker's yeast).